Here is a 79-residue protein sequence, read N- to C-terminus: Small ribosomal subunit protein bS16c (79 aa).

Belongs to the bacterial ribosomal protein bS16 family.

It is found in the plastid. Its subcellular location is the chloroplast. This Staurastrum punctulatum (Green alga) protein is Small ribosomal subunit protein bS16c.